The following is a 239-amino-acid chain: Ribosomal RNA small subunit methyltransferase G (239 aa).

S-adenosyl-L-methionine is bound by residues glycine 77, phenylalanine 82, 128–129 (AE), and arginine 146. Residues 215–239 (DKRSQTPKKYPRKPGTPNKSPLLEK) form a disordered region.

It belongs to the methyltransferase superfamily. RNA methyltransferase RsmG family.

The protein resides in the cytoplasm. Functionally, specifically methylates the N7 position of guanine in position 535 of 16S rRNA. The sequence is that of Ribosomal RNA small subunit methyltransferase G from Staphylococcus saprophyticus subsp. saprophyticus (strain ATCC 15305 / DSM 20229 / NCIMB 8711 / NCTC 7292 / S-41).